The chain runs to 297 residues: Phosphatidylserine decarboxylase proenzyme (297 aa).

Catalysis depends on charge relay system; for autoendoproteolytic cleavage activity residues aspartate 92, histidine 149, and serine 254. The active-site Schiff-base intermediate with substrate; via pyruvic acid; for decarboxylase activity is the serine 254. The residue at position 254 (serine 254) is a Pyruvic acid (Ser); by autocatalysis.

It belongs to the phosphatidylserine decarboxylase family. PSD-B subfamily. Prokaryotic type I sub-subfamily. Heterodimer of a large membrane-associated beta subunit and a small pyruvoyl-containing alpha subunit. Pyruvate is required as a cofactor. Post-translationally, is synthesized initially as an inactive proenzyme. Formation of the active enzyme involves a self-maturation process in which the active site pyruvoyl group is generated from an internal serine residue via an autocatalytic post-translational modification. Two non-identical subunits are generated from the proenzyme in this reaction, and the pyruvate is formed at the N-terminus of the alpha chain, which is derived from the carboxyl end of the proenzyme. The autoendoproteolytic cleavage occurs by a canonical serine protease mechanism, in which the side chain hydroxyl group of the serine supplies its oxygen atom to form the C-terminus of the beta chain, while the remainder of the serine residue undergoes an oxidative deamination to produce ammonia and the pyruvoyl prosthetic group on the alpha chain. During this reaction, the Ser that is part of the protease active site of the proenzyme becomes the pyruvoyl prosthetic group, which constitutes an essential element of the active site of the mature decarboxylase.

The protein resides in the cell membrane. The enzyme catalyses a 1,2-diacyl-sn-glycero-3-phospho-L-serine + H(+) = a 1,2-diacyl-sn-glycero-3-phosphoethanolamine + CO2. It participates in phospholipid metabolism; phosphatidylethanolamine biosynthesis; phosphatidylethanolamine from CDP-diacylglycerol: step 2/2. Its function is as follows. Catalyzes the formation of phosphatidylethanolamine (PtdEtn) from phosphatidylserine (PtdSer). The sequence is that of Phosphatidylserine decarboxylase proenzyme from Bordetella bronchiseptica (strain ATCC BAA-588 / NCTC 13252 / RB50) (Alcaligenes bronchisepticus).